The following is a 128-amino-acid chain: Small ribosomal subunit protein bS6 (128 aa).

This sequence belongs to the bacterial ribosomal protein bS6 family.

Its function is as follows. Binds together with bS18 to 16S ribosomal RNA. The polypeptide is Small ribosomal subunit protein bS6 (Nitratiruptor sp. (strain SB155-2)).